Reading from the N-terminus, the 951-residue chain is Sodium/potassium exporting P-type ATPase 1 (951 aa).

At 1–57 (MMGANSTEWHGQSVEQVTELLGTDVERGLKESVVGQLQKQFGPNELKGQRGVNPWKV) the chain is on the cytoplasmic side. Residues 58 to 78 (LLAQFTNGLTVILLIATVVSF) form a helical membrane-spanning segment. The Extracellular segment spans residues 79 to 82 (AVQD). Residues 83 to 103 (HAEGGVLAFVIIFNASVGFVQ) form a helical membrane-spanning segment. At 104–247 (EYRAEKTMDA…TPMQKRLNRM (144 aa)) the chain is on the cytoplasmic side. The helical transmembrane segment at 248-268 (AYILFGISLVLAVIVFAVNKF) threads the bilayer. Residues 269–273 (EFNTD) lie on the Extracellular side of the membrane. Residues 274–294 (IIIYAVSLGIAVIPEGLIAVI) traverse the membrane as a helical segment. The Cytoplasmic segment spans residues 295 to 717 (TIVMALGVRR…GRRIFSNIRK (423 aa)). Asp-330 acts as the 4-aspartylphosphate intermediate in catalysis. Mg(2+) is bound by residues Asp-330 and Thr-332. ATP contacts are provided by Thr-332, Glu-414, Lys-467, Arg-511, Thr-575, Gly-576, Asp-577, Arg-636, and Lys-642. Asp-661 serves as a coordination point for Mg(2+). Residue Asn-664 participates in ATP binding. A helical membrane pass occupies residues 718–738 (FILHLVSTNVGEVIVLIIGLA). Over 739–743 (FKDRN) the chain is Extracellular. A helical membrane pass occupies residues 744–764 (GVSVFPLAPVQILFMNMVTST). Residues 765-799 (PPAMALGVEAASKDTMKVPPHTKGLFGKEVLADMM) lie on the Cytoplasmic side of the membrane. A helical membrane pass occupies residues 800–820 (VYGIIMGSLILVDWVLVIYAF). Over 821 to 840 (GDSQLGLECNSDRMLNECNT) the chain is Extracellular. The helical transmembrane segment at 841–861 (VFRARSTIMVALIWMLLLHAY) threads the bilayer. The Cytoplasmic segment spans residues 862–885 (NCRHPRASLFTAEGGGASKLFSNR). The chain crosses the membrane as a helical span at residues 886 to 906 (LLVWSVLLGSLMPIPTVYIPT). At 907 to 916 (LNTKIFKQET) the chain is on the extracellular side. The chain crosses the membrane as a helical span at residues 917 to 937 (ISWEWSIVVVSVVAFFFLSEL). Over 938-951 (YKLIKRNVMTSRVI) the chain is Cytoplasmic.

This sequence belongs to the cation transport ATPase (P-type) (TC 3.A.3) family. Type IID subfamily. Mg(2+) serves as cofactor. Post-translationally, the active site is phosphorylated in presence of sodium or potassium and in conditions of higher pH. Not phosphorylated in presence of calcium ions.

Its subcellular location is the cell membrane. It carries out the reaction Na(+)(in) + ATP + H2O = Na(+)(out) + ADP + phosphate + H(+). The enzyme catalyses K(+)(in) + ATP + H2O = K(+)(out) + ADP + phosphate + H(+). Catalyzes the hydrolysis of ATP coupled with the export of sodium and potassium from the cell. Appears to export potassium more efficiently than sodium. May transport other cations such as lithium. Sodium/potassium efflux ATPases are involved in salt tolerance and maintaining the membrane potential across the plasma membrane in high salinity (Na+) or alkaline (K+) environments. The chain is Sodium/potassium exporting P-type ATPase 1 from Marchantia polymorpha (Common liverwort).